Here is a 106-residue protein sequence, read N- to C-terminus: Iron-sulfur cluster assembly protein CyaY (106 aa).

Belongs to the frataxin family.

In terms of biological role, involved in iron-sulfur (Fe-S) cluster assembly. May act as a regulator of Fe-S biogenesis. This is Iron-sulfur cluster assembly protein CyaY from Yersinia pestis bv. Antiqua (strain Antiqua).